The following is a 448-amino-acid chain: Fibulin-5 (448 aa).

Residues 1 to 23 (MPGIKRILTVTILALCLPSPGNA) form the signal peptide. Residues 42–82 (DIDECRTIPEACRGDMMCVNQNGGYLCIPRTNPVYRGPYSN) form the EGF-like 1; calcium-binding domain. 17 disulfide bridges follow: cysteine 46–cysteine 59, cysteine 53–cysteine 68, cysteine 131–cysteine 144, cysteine 138–cysteine 153, cysteine 155–cysteine 166, cysteine 172–cysteine 181, cysteine 177–cysteine 190, cysteine 192–cysteine 205, cysteine 211–cysteine 221, cysteine 217–cysteine 230, cysteine 232–cysteine 245, cysteine 251–cysteine 262, cysteine 258–cysteine 271, cysteine 273–cysteine 286, cysteine 292–cysteine 305, cysteine 299–cysteine 314, and cysteine 320–cysteine 332. The Cell attachment site signature appears at 54–56 (RGD). The EGF-like 2; calcium-binding domain maps to 127–167 (DVDECATDSHQCNPTQICINTEGGYTCSCTDGYWLLEGQCL). The EGF-like 3; calcium-binding domain occupies 168–206 (DIDECRYGYCQQLCANVPGSYSCTCNPGFTLNEDGRSCQ). The EGF-like 4; calcium-binding domain occupies 207–246 (DVNECATENPCVQTCVNTYGSFICRCDPGYELEEDGVHCS). The tract at residues 245 to 448 (CSDMDECSFS…LRIYVSQYPF (204 aa)) is interaction with LOXL1. The region spanning 247-287 (DMDECSFSEFLCQHECVNQPGTYFCSCPPGYILLDDNRSCQ) is the EGF-like 5; calcium-binding domain. N-linked (GlcNAc...) asparagine glycans are attached at residues asparagine 283 and asparagine 296. In terms of domain architecture, EGF-like 6; calcium-binding spans 288–333 (DINECEHRNHTCNLQQTCYNLQGGFKCIDPIRCEEPYLRISDNRCM).

Belongs to the fibulin family. In terms of assembly, homodimer. Monomer, homodimerizes in presence of Ca(2+). Interacts with ELN. Interacts (via N-terminus) with the integrins ITGAV/ITGB3, ITGAV/ITGB5 and ITGA9/ITGB1. Interacts with FBN1 (via N-terminal domain). Forms a ternary complex with ELN and FBN1. Interacts with EFEMP2 with moderate affinity. Interacts with LOXL1. In terms of processing, N-glycosylated. As to expression, expressed in skin fibroblasts (at protein level). Expressed predominantly in heart, ovary, and colon but also in kidney, pancreas, testis, lung and placenta. Not detectable in brain, liver, thymus, prostate, or peripheral blood leukocytes.

The protein localises to the secreted. The protein resides in the extracellular space. It localises to the extracellular matrix. Its function is as follows. Essential for elastic fiber formation, is involved in the assembly of continuous elastin (ELN) polymer and promotes the interaction of microfibrils and ELN. Stabilizes and organizes elastic fibers in the skin, lung and vasculature. Promotes adhesion of endothelial cells through interaction of integrins and the RGD motif. Vascular ligand for integrin receptors which may play a role in vascular development and remodeling. May act as an adapter that mediates the interaction between FBN1 and ELN. The polypeptide is Fibulin-5 (FBLN5) (Homo sapiens (Human)).